Here is an 877-residue protein sequence, read N- to C-terminus: Alanine--tRNA ligase (877 aa).

The Zn(2+) site is built by His-562, His-566, Cys-664, and His-668.

The protein belongs to the class-II aminoacyl-tRNA synthetase family. The cofactor is Zn(2+).

It localises to the cytoplasm. The catalysed reaction is tRNA(Ala) + L-alanine + ATP = L-alanyl-tRNA(Ala) + AMP + diphosphate. Catalyzes the attachment of alanine to tRNA(Ala) in a two-step reaction: alanine is first activated by ATP to form Ala-AMP and then transferred to the acceptor end of tRNA(Ala). Also edits incorrectly charged Ser-tRNA(Ala) and Gly-tRNA(Ala) via its editing domain. The sequence is that of Alanine--tRNA ligase from Synechocystis sp. (strain ATCC 27184 / PCC 6803 / Kazusa).